The sequence spans 729 residues: Cellulose synthase-like protein E1 (729 aa).

The next 2 helical transmembrane spans lie at 29 to 49 (VIAY…IWFY) and 64 to 84 (LIWF…VVTQ). Active-site residues include Asp-152 and Asp-443. The next 5 membrane-spanning stretches (helical) occupy residues 526-546 (LPVL…IPLF), 553-573 (WFIP…AEFL), 644-664 (MFLV…AAVA), 680-700 (QFVI…GMLL), and 709-729 (MSVT…LAFL).

It belongs to the glycosyltransferase 2 family. Plant cellulose synthase-like E subfamily.

It localises to the golgi apparatus membrane. Thought to be a Golgi-localized beta-glycan synthase that polymerize the backbones of noncellulosic polysaccharides (hemicelluloses) of plant cell wall. This chain is Cellulose synthase-like protein E1 (CSLE1), found in Arabidopsis thaliana (Mouse-ear cress).